The chain runs to 342 residues: N-acetyl-gamma-glutamyl-phosphate reductase (342 aa).

The active site involves cysteine 146.

The protein belongs to the NAGSA dehydrogenase family. Type 1 subfamily.

It localises to the cytoplasm. The enzyme catalyses N-acetyl-L-glutamate 5-semialdehyde + phosphate + NADP(+) = N-acetyl-L-glutamyl 5-phosphate + NADPH + H(+). It functions in the pathway amino-acid biosynthesis; L-arginine biosynthesis; N(2)-acetyl-L-ornithine from L-glutamate: step 3/4. Its function is as follows. Catalyzes the NADPH-dependent reduction of N-acetyl-5-glutamyl phosphate to yield N-acetyl-L-glutamate 5-semialdehyde. The chain is N-acetyl-gamma-glutamyl-phosphate reductase from Streptomyces avermitilis (strain ATCC 31267 / DSM 46492 / JCM 5070 / NBRC 14893 / NCIMB 12804 / NRRL 8165 / MA-4680).